Here is a 182-residue protein sequence, read N- to C-terminus: Lipoprotein signal peptidase (182 aa).

The next 3 membrane-spanning stretches (helical) occupy residues 12–32 (VAVF…TKAW), 68–88 (ATWV…VAGV), and 91–111 (ISMK…GNLI). Active-site residues include aspartate 127 and aspartate 140. A helical transmembrane segment spans residues 135 to 155 (VGNVADIYLVVAGVVLVILIL).

Belongs to the peptidase A8 family.

It localises to the cell membrane. The catalysed reaction is Release of signal peptides from bacterial membrane prolipoproteins. Hydrolyzes -Xaa-Yaa-Zaa-|-(S,diacylglyceryl)Cys-, in which Xaa is hydrophobic (preferably Leu), and Yaa (Ala or Ser) and Zaa (Gly or Ala) have small, neutral side chains.. The protein operates within protein modification; lipoprotein biosynthesis (signal peptide cleavage). This protein specifically catalyzes the removal of signal peptides from prolipoproteins. The chain is Lipoprotein signal peptidase from Bifidobacterium longum subsp. infantis (strain ATCC 15697 / DSM 20088 / JCM 1222 / NCTC 11817 / S12).